The primary structure comprises 1038 residues: Elongation factor 3 (1038 aa).

HEAT repeat units lie at residues 93–131 (EAYLLPLLSVFLDLLGDKKPTVRPVAQEAALTIISSANK), 133–170 (STIRILPILFDGLDRSKKWQTKKGALDLIAELSKVAPY), 174–211 (RCLPDIIPQVTDCMWDTRKEVKVAARDTMTKVCNVVGN), 213–249 (DIEPFIPALVSCLANPTEVPECTHKLASTTFVKTVEA), 255–287 (MEPLLKRALAEGKTAVKRQAAVIIDNMCKLMDD), and 292–331 (QLFIPKLLPGLKKVIETQADPECREVATRAHETLFVAGGS). Residue Glu-406 coordinates ADP. ABC transporter domains follow at residues 426 to 654 (IFIE…YYEL) and 680 to 995 (IRLT…EEVT). 4 residues coordinate ADP: Asn-716, Glu-924, Asn-927, and His-953. A disordered region spans residues 1012–1038 (RKEKKAKDKARKEAEARGEYYSDSDEE). A compositionally biased stretch (basic and acidic residues) spans 1021-1031 (ARKEAEARGEY).

This sequence belongs to the ABC transporter superfamily. ABCF family. EF3 subfamily. Monomer.

The protein resides in the cytoplasm. It catalyses the reaction ATP + H2O = ADP + phosphate + H(+). The protein operates within protein biosynthesis; polypeptide chain elongation. Functionally, ribosome-dependent ATPase that functions in cytoplasmic translation elongation. Required for the ATP-dependent release of deacylated tRNA from the ribosomal E-site during protein biosynthesis. Stimulates the eEF1A-dependent binding of aminoacyl-tRNA to the ribosomal A-site, which has reduced affinity for tRNA as long as the E-site is occupied. Assists translation termination by stimulating the release of nascent protein from the ribosome by release factors. The chain is Elongation factor 3 from Phytophthora infestans (strain T30-4) (Potato late blight agent).